Consider the following 506-residue polypeptide: Maturase K (506 aa).

The protein belongs to the intron maturase 2 family. MatK subfamily.

The protein resides in the plastid. Its subcellular location is the chloroplast. Its function is as follows. Usually encoded in the trnK tRNA gene intron. Probably assists in splicing its own and other chloroplast group II introns. This Medicago sativa (Alfalfa) protein is Maturase K.